The following is a 122-amino-acid chain: MAITKEDILEAVGSLTVMELNDLVKAFEEKFGVSAAAVAVASSAGPAAAAEEKTEFDVVLASAGDQKVGVIKVVRAITGLGLKEAKDIVDGAPKTIKEGVSKAEAEDIQKQLEEAGAKVEIK.

It belongs to the bacterial ribosomal protein bL12 family. As to quaternary structure, homodimer. Part of the ribosomal stalk of the 50S ribosomal subunit. Forms a multimeric L10(L12)X complex, where L10 forms an elongated spine to which 2 to 4 L12 dimers bind in a sequential fashion. Binds GTP-bound translation factors.

In terms of biological role, forms part of the ribosomal stalk which helps the ribosome interact with GTP-bound translation factors. Is thus essential for accurate translation. The polypeptide is Large ribosomal subunit protein bL12 (Neisseria lactamica).